Reading from the N-terminus, the 302-residue chain is Glutaminase (302 aa).

Positions 61, 111, 155, 162, 186, 238, and 256 each coordinate substrate.

This sequence belongs to the glutaminase family. As to quaternary structure, homotetramer.

The catalysed reaction is L-glutamine + H2O = L-glutamate + NH4(+). The chain is Glutaminase from Pseudomonas fluorescens (strain SBW25).